The following is a 272-amino-acid chain: Glutamate racemase (272 aa).

Residues aspartate 16–serine 17 and tyrosine 48–glycine 49 each bind substrate. Cysteine 79 (proton donor/acceptor) is an active-site residue. A substrate-binding site is contributed by asparagine 80–threonine 81. Cysteine 191 serves as the catalytic Proton donor/acceptor. A substrate-binding site is contributed by threonine 192–histidine 193.

Belongs to the aspartate/glutamate racemases family.

It catalyses the reaction L-glutamate = D-glutamate. Its pathway is cell wall biogenesis; peptidoglycan biosynthesis. Provides the (R)-glutamate required for cell wall biosynthesis. The polypeptide is Glutamate racemase (Chlorobaculum parvum (strain DSM 263 / NCIMB 8327) (Chlorobium vibrioforme subsp. thiosulfatophilum)).